Reading from the N-terminus, the 1043-residue chain is NACHT, LRR and PYD domains-containing protein 13 (1043 aa).

A Pyrin domain is found at M1 to E107. The 330-residue stretch at Q229–P558 folds into the NACHT domain. G235–T242 serves as a coordination point for ATP. LRR repeat units follow at residues N725–A749, N781–A804, I837–H864, N894–E917, D923–N946, N951–P978, and S1007–K1030.

It belongs to the NLRP family.

Functionally, involved in inflammation. The chain is NACHT, LRR and PYD domains-containing protein 13 (NLRP13) from Homo sapiens (Human).